Consider the following 474-residue polypeptide: Glutamate--tRNA ligase (474 aa).

Positions 9-19 (PSPTGYLHVGG) match the 'HIGH' region motif. Residues 240–244 (KLSKR) carry the 'KMSKS' region motif. K243 contacts ATP.

Belongs to the class-I aminoacyl-tRNA synthetase family. Glutamate--tRNA ligase type 1 subfamily. In terms of assembly, monomer.

It localises to the cytoplasm. It catalyses the reaction tRNA(Glu) + L-glutamate + ATP = L-glutamyl-tRNA(Glu) + AMP + diphosphate. In terms of biological role, catalyzes the attachment of glutamate to tRNA(Glu) in a two-step reaction: glutamate is first activated by ATP to form Glu-AMP and then transferred to the acceptor end of tRNA(Glu). This chain is Glutamate--tRNA ligase, found in Vibrio vulnificus (strain CMCP6).